We begin with the raw amino-acid sequence, 45 residues long: Myotoxin-3 (45 aa).

3 disulfide bridges follow: C4–C36, C11–C30, and C18–C37.

Monomer. As to expression, expressed by the venom gland.

It is found in the secreted. Functionally, cationic peptide that possesses multiple functions. It acts as a cell-penetrating peptide (CPP), and as a potent voltage-gated potassium channel (Kv) inhibitor. It exhibits antimicrobial activities, hind limb paralysis, and severe muscle necrosis by a non-enzymatic mechanism. In Crotalus viridis viridis (Prairie rattlesnake), this protein is Myotoxin-3.